A 303-amino-acid chain; its full sequence is Sulfate adenylyltransferase subunit 2 (303 aa).

Belongs to the PAPS reductase family. CysD subfamily. In terms of assembly, heterodimer composed of CysD, the smaller subunit, and CysN.

It carries out the reaction sulfate + ATP + H(+) = adenosine 5'-phosphosulfate + diphosphate. It functions in the pathway sulfur metabolism; hydrogen sulfide biosynthesis; sulfite from sulfate: step 1/3. Functionally, with CysN forms the ATP sulfurylase (ATPS) that catalyzes the adenylation of sulfate producing adenosine 5'-phosphosulfate (APS) and diphosphate, the first enzymatic step in sulfur assimilation pathway. APS synthesis involves the formation of a high-energy phosphoric-sulfuric acid anhydride bond driven by GTP hydrolysis by CysN coupled to ATP hydrolysis by CysD. This Bacteroides fragilis (strain YCH46) protein is Sulfate adenylyltransferase subunit 2.